The chain runs to 568 residues: 2-succinyl-5-enolpyruvyl-6-hydroxy-3-cyclohexene-1-carboxylate synthase (568 aa).

It belongs to the TPP enzyme family. MenD subfamily. In terms of assembly, homodimer. Mg(2+) serves as cofactor. Mn(2+) is required as a cofactor. It depends on thiamine diphosphate as a cofactor.

The enzyme catalyses isochorismate + 2-oxoglutarate + H(+) = 5-enolpyruvoyl-6-hydroxy-2-succinyl-cyclohex-3-ene-1-carboxylate + CO2. It functions in the pathway quinol/quinone metabolism; 1,4-dihydroxy-2-naphthoate biosynthesis; 1,4-dihydroxy-2-naphthoate from chorismate: step 2/7. It participates in quinol/quinone metabolism; menaquinone biosynthesis. Functionally, catalyzes the thiamine diphosphate-dependent decarboxylation of 2-oxoglutarate and the subsequent addition of the resulting succinic semialdehyde-thiamine pyrophosphate anion to isochorismate to yield 2-succinyl-5-enolpyruvyl-6-hydroxy-3-cyclohexene-1-carboxylate (SEPHCHC). The protein is 2-succinyl-5-enolpyruvyl-6-hydroxy-3-cyclohexene-1-carboxylate synthase of Histophilus somni (strain 129Pt) (Haemophilus somnus).